A 191-amino-acid chain; its full sequence is Cytochrome c biogenesis ATP-binding export protein CcmA (191 aa).

Positions 2-190 (LSLHQLQFKN…SIKSAQILRI (189 aa)) constitute an ABC transporter domain. 29 to 36 (GANGCGKS) is a binding site for ATP.

This sequence belongs to the ABC transporter superfamily. CcmA exporter (TC 3.A.1.107) family. The complex is composed of two ATP-binding proteins (CcmA) and two transmembrane proteins (CcmB).

It localises to the cell inner membrane. It carries out the reaction heme b(in) + ATP + H2O = heme b(out) + ADP + phosphate + H(+). Part of the ABC transporter complex CcmAB involved in the biogenesis of c-type cytochromes; once thought to export heme, this seems not to be the case, but its exact role is uncertain. Responsible for energy coupling to the transport system. The sequence is that of Cytochrome c biogenesis ATP-binding export protein CcmA from Rickettsia conorii (strain ATCC VR-613 / Malish 7).